Consider the following 185-residue polypeptide: dCTP deaminase (185 aa).

DCTP is bound by residues 107 to 112 (KSTYAR), 131 to 133 (TLE), glutamine 152, tyrosine 166, and glutamine 176. Residue glutamate 133 is the Proton donor/acceptor of the active site.

Belongs to the dCTP deaminase family. In terms of assembly, homotrimer.

It catalyses the reaction dCTP + H2O + H(+) = dUTP + NH4(+). Its pathway is pyrimidine metabolism; dUMP biosynthesis; dUMP from dCTP (dUTP route): step 1/2. Its function is as follows. Catalyzes the deamination of dCTP to dUTP. This chain is dCTP deaminase, found in Wolbachia pipientis wMel.